A 632-amino-acid chain; its full sequence is Maltase 1 (632 aa).

Residues 1–29 show a composition bias toward basic and acidic residues; that stretch reads MEEGERWREGHVYQRSSETRKPTNYDRPD. Residues 1–30 are disordered; it reads MEEGERWREGHVYQRSSETRKPTNYDRPDS. N-linked (GlcNAc...) asparagine glycosylation is found at Asn-179 and Asn-212. Asp-280 functions as the Nucleophile in the catalytic mechanism. Asn-333 is a glycosylation site (N-linked (GlcNAc...) asparagine). Catalysis depends on Glu-348, which acts as the Proton donor. N-linked (GlcNAc...) asparagine glycosylation is found at Asn-461, Asn-575, and Asn-578.

Belongs to the glycosyl hydrolase 13 family.

The catalysed reaction is Hydrolysis of terminal, non-reducing (1-&gt;4)-linked alpha-D-glucose residues with release of alpha-D-glucose.. In Drosophila virilis (Fruit fly), this protein is Maltase 1 (Mal-B1).